A 1474-amino-acid chain; its full sequence is Alpha-2-macroglobulin (1474 aa).

The first 23 residues, 1-23, serve as a signal peptide directing secretion; it reads MGKNKLLHPSLVLLLLVLLPTDA. The cysteines at positions 48 and 86 are disulfide-linked. N-linked (GlcNAc...) asparagine glycosylation is found at asparagine 55, asparagine 70, and asparagine 247. 2 disulfide bridges follow: cysteine 251–cysteine 299 and cysteine 269–cysteine 287. N-linked (GlcNAc...) asparagine glycosylation is found at asparagine 396 and asparagine 410. 8 cysteine pairs are disulfide-bonded: cysteine 470/cysteine 563, cysteine 595/cysteine 771, cysteine 642/cysteine 689, cysteine 821/cysteine 849, cysteine 847/cysteine 883, cysteine 921/cysteine 1321, cysteine 1079/cysteine 1127, and cysteine 1352/cysteine 1467. The segment at 690 to 728 is bait region; it reads PQLQQYEMHGPEGLRVGFYESDVMGRGHARLVHAEEPPT. Residues glutamine 693 and glutamine 694 each participate in an isoglutamyl lysine isopeptide (Gln-Lys) (interchain with K-? in other proteins) cross-link. Inhibitory stretches follow at residues 704–709, 719–723, and 730–735; these read RVGFYE, RLVHA, and TVRKYF. Residue asparagine 869 is glycosylated (N-linked (GlcNAc...) asparagine). Residues 972-975 constitute a cross-link (isoglutamyl cysteine thioester (Cys-Gln)); sequence CGEQ. An N-linked (GlcNAc...) asparagine glycan is attached at asparagine 991. N-linked (GlcNAc...) asparagine glycosylation occurs at asparagine 1424.

It belongs to the protease inhibitor I39 (alpha-2-macroglobulin) family. In terms of assembly, homotetramer; disulfide-linked. Plasma.

Its subcellular location is the secreted. Is able to inhibit all four classes of proteinases by a unique 'trapping' mechanism. This protein has a peptide stretch, called the 'bait region' which contains specific cleavage sites for different proteinases. When a proteinase cleaves the bait region, a conformational change is induced in the protein which traps the proteinase. The entrapped enzyme remains active against low molecular weight substrates (activity against high molecular weight substrates is greatly reduced). Following cleavage in the bait region a thioester bond is hydrolyzed and mediates the covalent binding of the protein to the proteinase. The polypeptide is Alpha-2-macroglobulin (A2M) (Pongo abelii (Sumatran orangutan)).